The following is a 342-amino-acid chain: Oxygen-dependent coproporphyrinogen-III oxidase (342 aa).

Ser-98 provides a ligand contact to substrate. 2 residues coordinate a divalent metal cation: His-102 and His-112. Catalysis depends on His-112, which acts as the Proton donor. Position 114-116 (114-116) interacts with substrate; that stretch reads NYR. A divalent metal cation is bound by residues His-146 and His-176. Positions 266-301 are important for dimerization; the sequence is YVEFNLVWDRGTIFGLQTNGRTESILMSLPPLARWE.

This sequence belongs to the aerobic coproporphyrinogen-III oxidase family. Homodimer. It depends on a divalent metal cation as a cofactor.

It localises to the cytoplasm. The catalysed reaction is coproporphyrinogen III + O2 + 2 H(+) = protoporphyrinogen IX + 2 CO2 + 2 H2O. It functions in the pathway porphyrin-containing compound metabolism; protoporphyrin-IX biosynthesis; protoporphyrinogen-IX from coproporphyrinogen-III (O2 route): step 1/1. In terms of biological role, involved in the heme and chlorophyll biosynthesis. Catalyzes the aerobic oxidative decarboxylation of propionate groups of rings A and B of coproporphyrinogen-III to yield the vinyl groups in protoporphyrinogen-IX. This chain is Oxygen-dependent coproporphyrinogen-III oxidase, found in Prochlorococcus marinus (strain MIT 9515).